A 371-amino-acid chain; its full sequence is Aldose sugar dehydrogenase YliI (371 aa).

The N-terminal stretch at 1-20 (MHRQSFFLVPLICLSSALWA) is a signal peptide. Residue Q82 participates in pyrroloquinoline quinone binding. H147 serves as the catalytic Proton acceptor. Residues 214–215 (RN) are PQQ. Ca(2+) contacts are provided by E240 and Y250. Y261 provides a ligand contact to pyrroloquinoline quinone. PQQ stretches follow at residues 312–314 (ALK) and 341–343 (RIR).

Belongs to the PQQ oxidoreductase GdhB family. As to quaternary structure, monomer. Ca(2+) is required as a cofactor. Requires pyrroloquinoline quinone as cofactor.

It localises to the cell outer membrane. Aldose sugar dehydrogenase with broad substrate specificity. The physiological substrate is unknown. Can oxidize glucose to gluconolactone. Can also utilize D-arabinose, L-arabinose and 2-deoxy-glucose. Has higher activity towards oligomeric sugars, such as maltose, maltotriose or cellobiose. It may function to input sugar-derived electrons into the respiratory network. The sequence is that of Aldose sugar dehydrogenase YliI (yliI) from Escherichia coli (strain K12).